Reading from the N-terminus, the 432-residue chain is Gamma-glutamyl phosphate reductase (432 aa).

It belongs to the gamma-glutamyl phosphate reductase family.

It is found in the cytoplasm. It carries out the reaction L-glutamate 5-semialdehyde + phosphate + NADP(+) = L-glutamyl 5-phosphate + NADPH + H(+). It functions in the pathway amino-acid biosynthesis; L-proline biosynthesis; L-glutamate 5-semialdehyde from L-glutamate: step 2/2. Its function is as follows. Catalyzes the NADPH-dependent reduction of L-glutamate 5-phosphate into L-glutamate 5-semialdehyde and phosphate. The product spontaneously undergoes cyclization to form 1-pyrroline-5-carboxylate. This chain is Gamma-glutamyl phosphate reductase, found in Clavibacter michiganensis subsp. michiganensis (strain NCPPB 382).